The chain runs to 206 residues: Ras-related protein Rab-18 (206 aa).

N-acetylmethionine is present on M1. Positions 17, 20, 21, 22, 23, 34, 35, 40, 66, 123, and 125 each coordinate GTP. S22 contacts Mg(2+). 2 short sequence motifs (switch) span residues 31–45 and 63–80; these read DTFDPELAATIGVDF and DTAGQERFRTLTPSYYRG. A Mg(2+)-binding site is contributed by T40. Phosphoserine is present on S144. A152 is a binding site for GTP. Residue C199 is the site of S-palmitoyl cysteine attachment. C203 carries the cysteine methyl ester modification. Residue C203 is the site of S-geranylgeranyl cysteine attachment. Residues 204-206 constitute a propeptide, removed in mature form; sequence SVL.

This sequence belongs to the small GTPase superfamily. Rab family. Interacts (in GTP-bound form) with ZFYVE1. Interacts with ZW10 and this interaction is enhanced in the presence of ZFYVE1. Interacts with BSCL2. As to quaternary structure, (Microbial infection) Interacts with Hepatitis C virus (HCV) non-structural protein 5A; this interaction may promote the association of NS5A and other viral replicase components with lipid droplets. Mg(2+) serves as cofactor. Ubiquitous.

It localises to the endoplasmic reticulum membrane. It is found in the golgi apparatus. Its subcellular location is the cis-Golgi network membrane. The protein resides in the lipid droplet. The protein localises to the apical cell membrane. It carries out the reaction GTP + H2O = GDP + phosphate + H(+). With respect to regulation, regulated by guanine nucleotide exchange factor (GEF) RAB3GAP1-RAB3GAP2 complex at the cis-Golgi membrane which promotes the exchange of bound GDP for free GTP. Regulated by GTPase activating protein (GAP) TBC1D20 at the ER membrane which increases the GTP hydrolysis activity. Inhibited by GDP dissociation inhibitors (GDIs) which prevent Rab-GDP dissociation. The small GTPases Rab are key regulators of intracellular membrane trafficking, from the formation of transport vesicles to their fusion with membranes. Rabs cycle between an inactive GDP-bound form and an active GTP-bound form that is able to recruit to membranes different sets of downstream effectors directly responsible for vesicle formation, movement, tethering and fusion. RAB18 is required for the localization of ZFYVE1 to lipid droplets and for its function in mediating the formation of endoplasmic reticulum-lipid droplets (ER-LD) contacts. Also required for maintaining endoplasmic reticulum structure. Plays a role in apical endocytosis/recycling. Plays a key role in eye and brain development and neurodegeneration. The sequence is that of Ras-related protein Rab-18 from Homo sapiens (Human).